The sequence spans 292 residues: Glutamyl-Q tRNA(Asp) synthetase (292 aa).

L-glutamate is bound by residues 11-15 (RFAPS) and Glu-47. The short motif at 14-24 (PSPTGPLHFGS) is the 'HIGH' region element. Residues Cys-103, Cys-105, Tyr-116, and Cys-120 each contribute to the Zn(2+) site. L-glutamate is bound by residues Tyr-173 and Arg-191. The short motif at 229-233 (KLSKQ) is the 'KMSKS' region element. ATP is bound at residue Lys-232.

It belongs to the class-I aminoacyl-tRNA synthetase family. GluQ subfamily. It depends on Zn(2+) as a cofactor.

Its function is as follows. Catalyzes the tRNA-independent activation of glutamate in presence of ATP and the subsequent transfer of glutamate onto a tRNA(Asp). Glutamate is transferred on the 2-amino-5-(4,5-dihydroxy-2-cyclopenten-1-yl) moiety of the queuosine in the wobble position of the QUC anticodon. This chain is Glutamyl-Q tRNA(Asp) synthetase, found in Acinetobacter baylyi (strain ATCC 33305 / BD413 / ADP1).